The chain runs to 129 residues: Glyoxalase domain-containing protein 5 homolog (129 aa).

One can recognise a VOC domain in the interval 5-128 (RLDHLVLTVS…DYNLIEISNY (124 aa)).

It belongs to the glyoxalase I family.

In Dictyostelium discoideum (Social amoeba), this protein is Glyoxalase domain-containing protein 5 homolog (glod5).